The primary structure comprises 176 residues: Probable DNA-directed RNA polymerase subunit delta (176 aa).

The region spanning 14–81 (CSMIEVVHSV…GENRWGLRSW (68 aa)) is the HTH HARE-type domain. Positions 91 to 176 (ILPQPKPKKK…ETEEEEEEEL (86 aa)) are disordered. Acidic residues predominate over residues 106–176 (DGFDDYIEED…ETEEEEEEEL (71 aa)).

This sequence belongs to the RpoE family. RNAP is composed of a core of 2 alpha, a beta and a beta' subunits. The core is associated with a delta subunit and one of several sigma factors.

In terms of biological role, participates in both the initiation and recycling phases of transcription. In the presence of the delta subunit, RNAP displays an increased specificity of transcription, a decreased affinity for nucleic acids, and an increased efficiency of RNA synthesis because of enhanced recycling. This chain is Probable DNA-directed RNA polymerase subunit delta, found in Bacillus thuringiensis (strain Al Hakam).